Consider the following 64-residue polypeptide: STKKAVPEAKAALNQMKLEIANELGLSNYESVDKGNLTARQNGYVGGYMTKKLVEMAERQMSGK.

It belongs to the alpha/beta-type SASP family.

In terms of biological role, SASP are bound to spore DNA. They are double-stranded DNA-binding proteins that cause DNA to change to an a-like conformation. They protect the DNA backbone from chemical and enzymatic cleavage and are thus involved in dormant spore's high resistance to UV light. This Paraclostridium bifermentans (Clostridium bifermentans) protein is Small, acid-soluble spore protein beta.